Reading from the N-terminus, the 214-residue chain is Adenylate kinase (214 aa).

10–15 (GAGKGT) contributes to the ATP binding site. The interval 30-59 (STGDMFRAAIKAGTELGKQAKALMDEGKLV) is NMP. AMP is bound by residues threonine 31, arginine 36, 57-59 (KLV), 85-88 (GFPR), and glutamine 92. The LID stretch occupies residues 122-159 (GRRVHQTSGRSYHIVYNPPKVEGKDDVTGEDLIIRADD). Residues arginine 123 and 132-133 (SY) each bind ATP. AMP contacts are provided by arginine 156 and arginine 167. Glutamine 200 lines the ATP pocket.

It belongs to the adenylate kinase family. Monomer.

The protein localises to the cytoplasm. The enzyme catalyses AMP + ATP = 2 ADP. Its pathway is purine metabolism; AMP biosynthesis via salvage pathway; AMP from ADP: step 1/1. Catalyzes the reversible transfer of the terminal phosphate group between ATP and AMP. Plays an important role in cellular energy homeostasis and in adenine nucleotide metabolism. The protein is Adenylate kinase of Haemophilus influenzae (strain PittEE).